A 1657-amino-acid polypeptide reads, in one-letter code: Alsin (1657 aa).

RCC1 repeat units lie at residues 59-108, 109-167, and 169-218; these read DGEV…AVTD, NGVA…ALSI, and REIW…ALVQ. The interval 432-480 is disordered; the sequence is TGAQAGSSAIGPEGLKDSREEQVKQESMQGKKSSSLVDIREEETEGGSR. Residues 445–455 show a composition bias toward basic and acidic residues; it reads GLKDSREEQVK. The span at 456 to 467 shows a compositional bias: polar residues; it reads QESMQGKKSSSL. 4 positions are modified to phosphoserine: S465, S466, S483, and S492. T510 bears the Phosphothreonine mark. 2 RCC1 repeats span residues 525–576 and 578–627; these read RTEV…ALTA and SQVY…FLVD. An N6-acetyllysine modification is found at K533. Residues 690–885 enclose the DH domain; the sequence is GYIASLHELA…ECLALHLGRK (196 aa). A PH domain is found at 901 to 1007; the sequence is GKMTDSLRKP…RAISQAVDQA (107 aa). 8 MORN repeats span residues 1049-1071, 1072-1094, 1100-1122, 1123-1145, 1151-1173, 1175-1197, 1198-1220, and 1221-1244; these read YDGRWLSGKPHGRGVLKWPDGKM, YSGMFRNGLEDGYGEYRIPNKAM, YVGHWKEGKMCGQGVYSYASGEV, FEGCFQDNMRHGHGLLRSGKLTS, FIGQWVMDKKAGYGVFDDITRGE, YMGMWQDDVCQGNGVVVTQFGLY, YEGNFHLNKMMGNGVLLSEDDTI, and YEGEFSDDWTLSGKGTLTMPNGDY. S1335 carries the phosphoserine modification. The VPS9 domain occupies 1513-1657; the sequence is KQPDIALLGF…YYQIQREKLN (145 aa).

Forms a heteromeric complex with ALS2CL. Interacts with ALS2CL.

Functionally, may act as a GTPase regulator. Controls survival and growth of spinal motoneurons. The chain is Alsin (ALS2) from Homo sapiens (Human).